The primary structure comprises 270 residues: Hemin import ATP-binding protein HmuV (270 aa).

An ABC transporter domain is found at Leu5 to Glu242. ATP is bound at residue Gly37–Ser44.

The protein belongs to the ABC transporter superfamily. Heme (hemin) importer (TC 3.A.1.14.5) family. The complex is composed of two ATP-binding proteins (HmuV), two transmembrane proteins (HmuU) and a solute-binding protein (HmuT).

The protein resides in the cell inner membrane. Part of the ABC transporter complex HmuTUV involved in hemin import. Responsible for energy coupling to the transport system. The chain is Hemin import ATP-binding protein HmuV from Rhodopseudomonas palustris (strain BisA53).